The sequence spans 661 residues: UvrABC system protein B (661 aa).

The 154-residue stretch at 25–178 (EGILKGEKFQ…DEVIRDLIRM (154 aa)) folds into the Helicase ATP-binding domain. 38 to 45 (GVTGSGKT) provides a ligand contact to ATP. A Beta-hairpin motif is present at residues 91 to 114 (YYDYYQPEAYIPETDTYIEKDSSI). The Helicase C-terminal domain occupies 429–591 (QIDHLIGEIR…IVPQTVRKGI (163 aa)). In terms of domain architecture, UVR spans 625 to 660 (EEYIKELEQEMKKLAIELEFEKAAKVRDKIFELKKL).

The protein belongs to the UvrB family. Forms a heterotetramer with UvrA during the search for lesions. Interacts with UvrC in an incision complex.

Its subcellular location is the cytoplasm. Functionally, the UvrABC repair system catalyzes the recognition and processing of DNA lesions. A damage recognition complex composed of 2 UvrA and 2 UvrB subunits scans DNA for abnormalities. Upon binding of the UvrA(2)B(2) complex to a putative damaged site, the DNA wraps around one UvrB monomer. DNA wrap is dependent on ATP binding by UvrB and probably causes local melting of the DNA helix, facilitating insertion of UvrB beta-hairpin between the DNA strands. Then UvrB probes one DNA strand for the presence of a lesion. If a lesion is found the UvrA subunits dissociate and the UvrB-DNA preincision complex is formed. This complex is subsequently bound by UvrC and the second UvrB is released. If no lesion is found, the DNA wraps around the other UvrB subunit that will check the other stand for damage. In Caldicellulosiruptor bescii (strain ATCC BAA-1888 / DSM 6725 / KCTC 15123 / Z-1320) (Anaerocellum thermophilum), this protein is UvrABC system protein B.